The sequence spans 122 residues: Small ribosomal subunit protein bS16 (122 aa).

A disordered region spans residues 87-122 (VGKAKQAEARKAGAKNVAKQAAEAKAEETPADNTEA).

This sequence belongs to the bacterial ribosomal protein bS16 family.

The protein is Small ribosomal subunit protein bS16 of Prochlorococcus marinus (strain MIT 9303).